The primary structure comprises 157 residues: Transcriptional repressor NrdR (157 aa).

The segment at 3–34 (CPFCGHMESQVKDSRPSEDGAAIRRRRLCPEC) is a zinc-finger region. The ATP-cone domain occupies 49–139 (LTIVKRSGRR…VYRDFRETSD (91 aa)).

It belongs to the NrdR family. It depends on Zn(2+) as a cofactor.

Its function is as follows. Negatively regulates transcription of bacterial ribonucleotide reductase nrd genes and operons by binding to NrdR-boxes. The polypeptide is Transcriptional repressor NrdR (Caulobacter sp. (strain K31)).